Reading from the N-terminus, the 378-residue chain is Actin-related protein 2/3 complex subunit 1A (378 aa).

WD repeat units follow at residues 8–47 (RFAE…HWER), 53–92 (KHDQ…WVPT), 97–138 (RLNR…WVSK), 143–182 (RHES…VDTK), 203–242 (LSYS…PLAQ), 257–295 (ISEK…KAAS), and 331–375 (VHDN…QELG).

The protein belongs to the WD repeat ARPC1 family. As to quaternary structure, component of the Arp2/3 complex composed of ARP2, ARP3, ARPC1/p41-ARC, ARPC2/p34-ARC, ARPC3/p21-ARC, ARPC4/p20-ARC and ARPC5/p16-ARC. As to expression, expressed at low levels in all tissues with a relatively highest expression in inflorescences.

It is found in the cytoplasm. The protein localises to the cytoskeleton. Functions as a component of the Arp2/3 complex which is involved in regulation of actin polymerization and together with an activating nucleation-promoting factor (NPF) mediates the formation of branched actin networks. Arp2/3 complex plays a critical role in the control of cell morphogenesis via the modulation of cell polarity development. This is Actin-related protein 2/3 complex subunit 1A (ARPC1A) from Arabidopsis thaliana (Mouse-ear cress).